Here is a 693-residue protein sequence, read N- to C-terminus: ATP-dependent DNA helicase RecG (693 aa).

A wedge domain region spans residues T48–E146. In terms of domain architecture, Helicase ATP-binding spans D283–I448. G296–T303 contributes to the ATP binding site. The DEAH box signature appears at D397–H400. Residues E482–E628 enclose the Helicase C-terminal domain.

The protein belongs to the helicase family. RecG subfamily. Monomer.

The enzyme catalyses Couples ATP hydrolysis with the unwinding of duplex DNA by translocating in the 3'-5' direction.. The catalysed reaction is ATP + H2O = ADP + phosphate + H(+). In terms of biological role, plays a critical role in recombination and DNA repair. Helps process Holliday junction intermediates to mature products by catalyzing branch migration. Has replication fork regression activity, unwinds stalled or blocked replication forks to make a HJ that can be resolved. Has a DNA unwinding activity characteristic of a DNA helicase with 3'-5' polarity. Its function is as follows. Plays a role in recovery after DNA ADP-ribosylation. The polypeptide is ATP-dependent DNA helicase RecG (Escherichia coli O127:H6 (strain E2348/69 / EPEC)).